Here is a 79-residue protein sequence, read N- to C-terminus: MAQQRRGGNRRRRKVDFIAANHIEYIDYKDTDLLKRFISERGKILPRRVSGTSAKNQRRLTIAIKRARIMGLLPFVTED.

It belongs to the bacterial ribosomal protein bS18 family. As to quaternary structure, part of the 30S ribosomal subunit. Forms a tight heterodimer with protein bS6.

Binds as a heterodimer with protein bS6 to the central domain of the 16S rRNA, where it helps stabilize the platform of the 30S subunit. The polypeptide is Small ribosomal subunit protein bS18 (Latilactobacillus sakei subsp. sakei (strain 23K) (Lactobacillus sakei subsp. sakei)).